Here is a 359-residue protein sequence, read N- to C-terminus: Src kinase-associated phosphoprotein 1 (359 aa).

The PH domain occupies 107 to 210; it reads NVIKQGYLEK…WVDQISFLLK (104 aa). A phosphotyrosine mark is found at tyrosine 142, tyrosine 219, and tyrosine 232. A compositionally biased stretch (acidic residues) spans 219-237; sequence YEEDEEEEEKEETYDDIDG. The disordered stretch occupies residues 219–239; the sequence is YEEDEEEEEKEETYDDIDGFD. Tyrosine 271 and tyrosine 295 each carry phosphotyrosine; by FYN. Positions 290 to 295 are interaction with FYB1; that stretch reads RKGVDY. In terms of domain architecture, SH3 spans 294 to 355; that stretch reads DYASYYQGLW…PKEYLTTAFE (62 aa).

It belongs to the SKAP family. Homodimer. Interacts with FYN. Interacts with PTPRC. Interacts with GRB2 when phosphorylated on Tyr-271. Interacts with FYB1, which is required for SKAP2 protein stability. Part of a complex consisting of SKAP1, FYB1 and CLNK. Interacts with RASGRP1. Interacts with FYB2. In terms of processing, phosphorylated on tyrosines. Phosphorylation by FYN on Tyr-271 is required for GRB2 interaction. Phosphorylation by FYN on Tyr-295 abolishes interaction with FYB1. Tyr-232 is dephosphorylated by PTPRC. In terms of tissue distribution, highly expressed in thymocytes and peripheral blood lymphocytes. Also expressed in spleen cells and testis. Present in T-cells (at protein level).

It is found in the cytoplasm. Its subcellular location is the nucleus. The protein resides in the cell membrane. Positively regulates T-cell receptor signaling by enhancing the MAP kinase pathway. Required for optimal conjugation between T-cells and antigen-presenting cells by promoting the clustering of integrin ITGAL on the surface of T-cells. May be involved in high affinity immunoglobulin epsilon receptor signaling in mast cells. This chain is Src kinase-associated phosphoprotein 1 (SKAP1), found in Homo sapiens (Human).